The primary structure comprises 167 residues: MLPMITGFMNYGQQTLRAARYIGQGFMITLSHTNRLPVTIQYPYEKVITSERFRGRIHFEFDKCIACEVCVRVCPIDLPVVDWKLETNIRKKRLLNYSIDFGICIFCGNCVEYCPTNCLSMTEEYEFSTYDRHELNYNQIALGRLPMSVIDDYTIRTILNSPQTKNG.

2 4Fe-4S ferredoxin-type domains span residues 55–84 (GRIH…VDWK) and 95–124 (LNYS…MTEE). [4Fe-4S] cluster contacts are provided by Cys64, Cys67, Cys70, Cys74, Cys104, Cys107, Cys110, and Cys114.

This sequence belongs to the complex I 23 kDa subunit family. In terms of assembly, NDH is composed of at least 16 different subunits, 5 of which are encoded in the nucleus. [4Fe-4S] cluster serves as cofactor.

Its subcellular location is the plastid. It localises to the chloroplast thylakoid membrane. It carries out the reaction a plastoquinone + NADH + (n+1) H(+)(in) = a plastoquinol + NAD(+) + n H(+)(out). It catalyses the reaction a plastoquinone + NADPH + (n+1) H(+)(in) = a plastoquinol + NADP(+) + n H(+)(out). Functionally, NDH shuttles electrons from NAD(P)H:plastoquinone, via FMN and iron-sulfur (Fe-S) centers, to quinones in the photosynthetic chain and possibly in a chloroplast respiratory chain. The immediate electron acceptor for the enzyme in this species is believed to be plastoquinone. Couples the redox reaction to proton translocation, and thus conserves the redox energy in a proton gradient. This Lobularia maritima (Sweet alyssum) protein is NAD(P)H-quinone oxidoreductase subunit I, chloroplastic.